The chain runs to 301 residues: tRNA-cytidine(32) 2-sulfurtransferase (301 aa).

A PP-loop motif motif is present at residues S55 to S60. Positions 130, 133, and 221 each coordinate [4Fe-4S] cluster.

Belongs to the TtcA family. As to quaternary structure, homodimer. Mg(2+) is required as a cofactor. [4Fe-4S] cluster serves as cofactor.

It is found in the cytoplasm. It catalyses the reaction cytidine(32) in tRNA + S-sulfanyl-L-cysteinyl-[cysteine desulfurase] + AH2 + ATP = 2-thiocytidine(32) in tRNA + L-cysteinyl-[cysteine desulfurase] + A + AMP + diphosphate + H(+). The protein operates within tRNA modification. Catalyzes the ATP-dependent 2-thiolation of cytidine in position 32 of tRNA, to form 2-thiocytidine (s(2)C32). The sulfur atoms are provided by the cysteine/cysteine desulfurase (IscS) system. The sequence is that of tRNA-cytidine(32) 2-sulfurtransferase from Acinetobacter baylyi (strain ATCC 33305 / BD413 / ADP1).